The chain runs to 883 residues: Ankyrin repeat and SAM domain-containing protein 6 (883 aa).

ANK repeat units lie at residues 8–37, 68–97, 101–130, 134–163, 181–210, 215–244, 282–312, 316–345, 350–379, and 383–414; these read PGLQ…DPVA, AGNS…SVNS, YGWS…DVNA, LGAS…IVDH, LGIT…DPNH, VGWS…NPDH, KRRP…HVNL, DGAT…DMDK, HGWT…DVAL, and NGYT…QVNK. Positions 30–50 are disordered; that stretch reads EPGADPVAGPEAGAEPAGPEA. Disordered stretches follow at residues 414-439, 490-522, 566-773, and 852-883; these read KDRG…IPVL, MRAP…RREK, SHTC…ITDE, and SFES…SSRR. Residues 566–576 show a composition bias toward basic and acidic residues; that stretch reads SHTCHNGKADP. The span at 607-630 shows a compositional bias: low complexity; it reads PSISRSPASPASSGSFNHSPHSSG. Gly residues predominate over residues 631 to 640; it reads GASGIGGMSR. Ser649 carries the post-translational modification Phosphoserine. A compositionally biased stretch (polar residues) spans 649–661; sequence SGGSVDSVLSQIA. 2 stretches are compositionally biased toward low complexity: residues 687–711 and 720–737; these read SSSP…PSSS and PPSG…TLTP. Residues Ser732 and Ser740 each carry the phosphoserine modification. The span at 748-768 shows a compositional bias: low complexity; it reads SSVSSSSSHRQSKSSGGSSSG. The SAM domain occupies 771 to 834; it reads TDEDELTGIL…LAAISELNAG (64 aa). Positions 852 to 862 are enriched in polar residues; the sequence is SFESSASNTRA. Basic and acidic residues predominate over residues 874–883; sequence RPEETVSSRR.

As to quaternary structure, homooligomer. Interacts with NEK8. Central component of a complex containing at least ANKS6, INVS, NEK8 and NPHP3. ANKS6 may organize complex assembly by linking INVS and NPHP3 to NEK8 and INVS may target the complex to the proximal ciliary axoneme. Interacts (via SAM domain) with BICC1 (via KH domains) in an RNA-dependent manner. Interacts (via SAM domain) with ANKS3 (via SAM domain). Post-translationally, hydroxylated at Asn-129, most probably by HIF1AN. This hydroxylation results in decreased NEK8-binding. Expressed in kidney (at protein level).

It localises to the cell projection. Its subcellular location is the cilium. The protein resides in the cytoplasm. Functionally, required for renal function. The chain is Ankyrin repeat and SAM domain-containing protein 6 (Anks6) from Mus musculus (Mouse).